We begin with the raw amino-acid sequence, 1097 residues long: DNA-directed RNA polymerase subunit beta (1097 aa).

The interval 1073 to 1097 (DINPRRNTPSRPTYESLGTSEYEED) is disordered. Residues 1077–1091 (RRNTPSRPTYESLGT) show a composition bias toward polar residues.

Belongs to the RNA polymerase beta chain family. In terms of assembly, in cyanobacteria the RNAP catalytic core is composed of 2 alpha, 1 beta, 1 beta', 1 gamma and 1 omega subunit. When a sigma factor is associated with the core the holoenzyme is formed, which can initiate transcription.

The enzyme catalyses RNA(n) + a ribonucleoside 5'-triphosphate = RNA(n+1) + diphosphate. Functionally, DNA-dependent RNA polymerase catalyzes the transcription of DNA into RNA using the four ribonucleoside triphosphates as substrates. The polypeptide is DNA-directed RNA polymerase subunit beta (Prochlorococcus marinus (strain MIT 9312)).